The chain runs to 1167 residues: Integrin alpha-10 (1167 aa).

An N-terminal signal peptide occupies residues 1-22 (MELPFVTHLFLPLVFLTGLCSP). Topologically, residues 23–1122 (FNLDEHHPRL…VVQTRPILIS (1100 aa)) are extracellular. FG-GAP repeat units follow at residues 24–85 (NLDE…HNAP) and 95–154 (QLGN…PQGS). A disulfide bridge links Cys-76 with Cys-86. N-linked (GlcNAc...) asparagine glycans are attached at residues Asn-98, Asn-234, Asn-336, and Asn-364. Residues 167-350 (DVVIVLDGSN…AALTDIVDAL (184 aa)) form the VWFA domain. FG-GAP repeat units follow at residues 361–412 (HAEN…LFPP), 417–470 (EDEF…KDGA), 472–534 (RVAQ…SLLT), 535–593 (LQGT…GVRP), and 597–657 (QRIA…VTPQ). Ca(2+)-binding residues include Asp-494, Asp-496, Asp-498, Asp-502, Asp-558, Asn-560, Asp-562, Asp-566, Asp-620, Asp-622, Asp-624, and Asp-628. 2 disulfide bridges follow: Cys-666–Cys-675 and Cys-681–Cys-736. N-linked (GlcNAc...) asparagine glycans are attached at residues Asn-733 and Asn-763. Residues Cys-789 and Cys-795 are joined by a disulfide bond. N-linked (GlcNAc...) asparagine glycans are attached at residues Asn-839, Asn-921, Asn-1011, Asn-1018, and Asn-1039. The chain crosses the membrane as a helical span at residues 1123–1145 (LWILIGSVLGGLLLLALLVFCLW). The Cytoplasmic portion of the chain corresponds to 1146-1167 (KLGFFAHKKIPEEEKREEKLEQ).

The protein belongs to the integrin alpha chain family. Heterodimer of an alpha and a beta subunit. Alpha-10 associates with beta-1. As to expression, widely expressed with highest expression in muscle and heart. Found in articular cartilage.

The protein localises to the membrane. Its function is as follows. Integrin alpha-10/beta-1 is a receptor for collagen. The sequence is that of Integrin alpha-10 (ITGA10) from Homo sapiens (Human).